The sequence spans 488 residues: MPERYGPRVIEHLVNPRNAGEVGGPSGVGEAGNAACGDQVRFTLRVGGDLRLQEVRYRAYGCAACIAAGSALAELAEGRSITGAAQISRGDIQEALGGPLPPGKEHGATLALDALHRAFEDYWSRQGDALLGGEGLGDGSGGRRGVVAAMSGGVDSAVTALLLKERGYEVVAVTFRLHDGEPGSRSCCSPDTVLFARETAHGLGIPHFTLNLRELFDRRVMRDFVGSYAAGRTPNPCVACNAHVKFHAAAFLADRLGLRHVATGHYARVGEGPCLERPEDGRKDQTYVLWPVPPRLLGRTIFPLGDYRKSEVRRIAEERGLAVARTPESQDICFIPDGDYRSFVRRRVRSEPGEIVDRQGRVLGRHAGVVDFTVGQRRGLGISAPTPLYVTEVRPRSRQVVVGSRRELEVRRMLVRGANWFLDPREAALVQVRYNGEPVPCELEEGAGGWEVALLEPVFGVAPGQSAVFYTRDGAKVVGGGIIARRDA.

Positions 1–130 (MPERYGPRVI…DYWSRQGDAL (130 aa)) are nifU-like protein. The interval 143-488 (RRGVVAAMSG…GGGIIARRDA (346 aa)) is tRNA-specific 2-thiouridylase MnmA. ATP-binding positions include 149–156 (AMSGGVDS) and Phe-175. Cys-240 functions as the Nucleophile in the catalytic mechanism. A disulfide bond links Cys-240 and Cys-333. Residue Gly-264 coordinates ATP. The interaction with tRNA stretch occupies residues 283-285 (KDQ). The active-site Cysteine persulfide intermediate is Cys-333. The tract at residues 433-434 (RY) is interaction with tRNA.

This sequence in the N-terminal section; belongs to the NifU family. It in the C-terminal section; belongs to the MnmA/TRMU family.

The protein resides in the cytoplasm. It carries out the reaction S-sulfanyl-L-cysteinyl-[protein] + uridine(34) in tRNA + AH2 + ATP = 2-thiouridine(34) in tRNA + L-cysteinyl-[protein] + A + AMP + diphosphate + H(+). In terms of biological role, may be involved in the formation or repair of [Fe-S] clusters present in iron-sulfur proteins. Catalyzes the 2-thiolation of uridine at the wobble position (U34) of tRNA, leading to the formation of s(2)U34. The protein is Bifunctional protein NifU/MnmA (nifU/mnmA) of Rubrobacter xylanophilus (strain DSM 9941 / JCM 11954 / NBRC 16129 / PRD-1).